The primary structure comprises 124 residues: T cell receptor beta variable 13 (124 aa).

A signal peptide spans methionine 1–alanine 31. The Ig-like domain maps to glycine 32 to leucine 124. An intrachain disulfide couples cysteine 52 to cysteine 120. Residue asparagine 106 is glycosylated (N-linked (GlcNAc...) asparagine).

Alpha-beta TR is a heterodimer composed of an alpha and beta chain; disulfide-linked. The alpha-beta TR is associated with the transmembrane signaling CD3 coreceptor proteins to form the TR-CD3 (TcR or TCR). The assembly of alpha-beta TR heterodimers with CD3 occurs in the endoplasmic reticulum where a single alpha-beta TR heterodimer associates with one CD3D-CD3E heterodimer, one CD3G-CD3E heterodimer and one CD247 homodimer forming a stable octameric structure. CD3D-CD3E and CD3G-CD3E heterodimers preferentially associate with TR alpha and TR beta chains, respectively. The association of the CD247 homodimer is the last step of TcR assembly in the endoplasmic reticulum and is required for transport to the cell surface.

The protein localises to the cell membrane. Its function is as follows. V region of the variable domain of T cell receptor (TR) beta chain that participates in the antigen recognition. Alpha-beta T cell receptors are antigen specific receptors which are essential to the immune response and are present on the cell surface of T lymphocytes. Recognize peptide-major histocompatibility (MH) (pMH) complexes that are displayed by antigen presenting cells (APC), a prerequisite for efficient T cell adaptive immunity against pathogens. Binding of alpha-beta TR to pMH complex initiates TR-CD3 clustering on the cell surface and intracellular activation of LCK that phosphorylates the ITAM motifs of CD3G, CD3D, CD3E and CD247 enabling the recruitment of ZAP70. In turn ZAP70 phosphorylates LAT, which recruits numerous signaling molecules to form the LAT signalosome. The LAT signalosome propagates signal branching to three major signaling pathways, the calcium, the mitogen-activated protein kinase (MAPK) kinase and the nuclear factor NF-kappa-B (NF-kB) pathways, leading to the mobilization of transcription factors that are critical for gene expression and essential for T cell growth and differentiation. The T cell repertoire is generated in the thymus, by V-(D)-J rearrangement. This repertoire is then shaped by intrathymic selection events to generate a peripheral T cell pool of self-MH restricted, non-autoaggressive T cells. Post-thymic interaction of alpha-beta TR with the pMH complexes shapes TR structural and functional avidity. This is T cell receptor beta variable 13 from Homo sapiens (Human).